The sequence spans 95 residues: Aspartyl/glutamyl-tRNA(Asn/Gln) amidotransferase subunit C (95 aa).

Belongs to the GatC family. Heterotrimer of A, B and C subunits.

The enzyme catalyses L-glutamyl-tRNA(Gln) + L-glutamine + ATP + H2O = L-glutaminyl-tRNA(Gln) + L-glutamate + ADP + phosphate + H(+). It catalyses the reaction L-aspartyl-tRNA(Asn) + L-glutamine + ATP + H2O = L-asparaginyl-tRNA(Asn) + L-glutamate + ADP + phosphate + 2 H(+). Allows the formation of correctly charged Asn-tRNA(Asn) or Gln-tRNA(Gln) through the transamidation of misacylated Asp-tRNA(Asn) or Glu-tRNA(Gln) in organisms which lack either or both of asparaginyl-tRNA or glutaminyl-tRNA synthetases. The reaction takes place in the presence of glutamine and ATP through an activated phospho-Asp-tRNA(Asn) or phospho-Glu-tRNA(Gln). This chain is Aspartyl/glutamyl-tRNA(Asn/Gln) amidotransferase subunit C, found in Campylobacter fetus subsp. fetus (strain 82-40).